Here is a 277-residue protein sequence, read N- to C-terminus: Thymidylate synthase (277 aa).

Arginine 21 lines the dUMP pocket. Histidine 51 contributes to the (6R)-5,10-methylene-5,6,7,8-tetrahydrofolate binding site. DUMP is bound at residue 126-127; sequence RR. The active-site Nucleophile is the cysteine 159. DUMP contacts are provided by residues 179 to 182, asparagine 190, and 220 to 222; these read RSAD and HLY. A (6R)-5,10-methylene-5,6,7,8-tetrahydrofolate-binding site is contributed by aspartate 182. Alanine 276 is a binding site for (6R)-5,10-methylene-5,6,7,8-tetrahydrofolate.

It belongs to the thymidylate synthase family. Bacterial-type ThyA subfamily. In terms of assembly, homodimer.

Its subcellular location is the cytoplasm. The enzyme catalyses dUMP + (6R)-5,10-methylene-5,6,7,8-tetrahydrofolate = 7,8-dihydrofolate + dTMP. The protein operates within pyrimidine metabolism; dTTP biosynthesis. In terms of biological role, catalyzes the reductive methylation of 2'-deoxyuridine-5'-monophosphate (dUMP) to 2'-deoxythymidine-5'-monophosphate (dTMP) while utilizing 5,10-methylenetetrahydrofolate (mTHF) as the methyl donor and reductant in the reaction, yielding dihydrofolate (DHF) as a by-product. This enzymatic reaction provides an intracellular de novo source of dTMP, an essential precursor for DNA biosynthesis. This Thioalkalivibrio sulfidiphilus (strain HL-EbGR7) protein is Thymidylate synthase.